A 162-amino-acid chain; its full sequence is UPF0178 protein RHOS4_24670 (162 aa).

Belongs to the UPF0178 family.

This is UPF0178 protein RHOS4_24670 from Cereibacter sphaeroides (strain ATCC 17023 / DSM 158 / JCM 6121 / CCUG 31486 / LMG 2827 / NBRC 12203 / NCIMB 8253 / ATH 2.4.1.) (Rhodobacter sphaeroides).